The following is a 1126-amino-acid chain: Formin-B (1126 aa).

Positions 1 to 21 are disordered; sequence MFFKGKKKDKEKEKSHGNIGN. Residues 38-406 form the GBD/FH3 domain; it reads EQNLSNEDLK…LILKDPSKES (369 aa). Positions 427-447 are enriched in low complexity; that stretch reads LNNSNNNNNNNNSNNNNNDSN. Residues 427–462 are disordered; the sequence is LNNSNNNNNNNNSNNNNNDSNVSTPNINTGSPLLPP. A compositionally biased stretch (polar residues) spans 448–462; the sequence is VSTPNINTGSPLLPP. Residues 463–514 adopt a coiled-coil conformation; it reads QQYQDLEQKLQLTQNEKNESQNKVKQLESEIKGLNSTLTGLQLKVTKLEADL. The span at 518-532 shows a compositional bias: polar residues; it reads SVTTPPSDTNGTTSP. Disordered regions lie at residues 518–619 and 1004–1078; these read SVTT…SVPS and ARKK…QNGT. Residues 527 to 611 enclose the FH1 domain; sequence NGTTSPPIEA…PGAPAVPNLP (85 aa). Positions 543–597 are enriched in pro residues; the sequence is GAPPPPPPPPPAPPVSGGGPPPPPPPPPPSSGGGPPPPPPPPSSGGPPPPPPPPG. Low complexity-rich tracts occupy residues 598 to 607, 1009 to 1022, and 1032 to 1064; these read GMKKPGAPAV, AASGPSVPSASGSS, and SPITPTSKSSISISQKPPQSTQPSISVQQQQQQ. The region spanning 612-1011 is the FH2 domain; it reads PKKSSVPSVK…LAARKKAAAS (400 aa). Residues 980-1010 adopt a coiled-coil conformation; sequence KFKNEFKRTIESIQKERENVQKLAARKKAAA. The region spanning 1071–1100 is the DAD domain; that stretch reads DDIPQNGTFMDQLMSKMKGGEAIRASRRAS.

It belongs to the formin homology family. Diaphanous subfamily. Interacts (via GBD/FH3 domain) with activated Rho-GTPases. Interacts with pfyA and pfyB.

Functionally, formins play an important role in the nucleation of actin and the formation of linear actin filaments. The protein is Formin-B (forB) of Dictyostelium discoideum (Social amoeba).